We begin with the raw amino-acid sequence, 181 residues long: Large ribosomal subunit protein uL5c (181 aa).

Belongs to the universal ribosomal protein uL5 family. As to quaternary structure, part of the 50S ribosomal subunit; contacts the 5S rRNA.

It is found in the plastid. The protein localises to the chloroplast. In terms of biological role, binds 5S rRNA, forms part of the central protuberance of the 50S subunit. This is Large ribosomal subunit protein uL5c (rpl5) from Porphyra purpurea (Red seaweed).